The sequence spans 1455 residues: MSKSLKKKSHWTSKVHESVIGRNPEGQLGFELKGGAENGQFPYLGEVKPGKVAYESGSKLVSEELLLEVNETPVAGLTIRDVLAVIKHCKDPLRLKCVKQGGIVDKDLRHYLNLRFQKGSVDHELQQIIRDNLYLRTVPCTTRPHKEGEVPGVDYIFITVEDFMELEKSGALLESGTYEDNYYGTPKPPAEPAPLLLNVTDQILPGATPSAEGKRKRNKSVSNMEKASIEPPEEEEEERPVVNGNGVVVTPESSEHEDKSAGASGEMPSQPYPAPVYSQPEELKEQMDDTKPTKPEDNEEPDPLPDNWEMAYTEKGEVYFIDHNTKTTSWLDPRLAKKAKPPEECKENELPYGWEKIDDPIYGTYYVDHINRRTQFENPVLEAKRKLQQHNMPHTELGTKPLQAPGFREKPLFTRDASQLKGTFLSTTLKKSNMGFGFTIIGGDEPDEFLQVKSVIPDGPAAQDGKMETGDVIVYINEVCVLGHTHADVVKLFQSVPIGQSVNLVLCRGYPLPFDPEDPANSMVPPLAIMERPPPVMVNGRHNYETYLEYISRTSQSVPDITDRPPHSLHSMPTDGQLDGTYPPPVHDDNVSMASSGATQAELMTLTIVKGAQGFGFTIADSPTGQRVKQILDIQGCPGLCEGDLIVEINQQNVQNLSHTEVVDILKDCPIGSETSLIIHRGGFFSPWKTPKPIMDRWENQGSPQTSLSAPAIPQNLPFPPALHRSSFPDSTEAFDPRKPDPYELYEKSRAIYESRQQVPPRTSFRMDSSGPDYKELDVHLRRMESGFGFRILGGDEPGQPILIGAVIAMGSADRDGRLHPGDELVYVDGIPVAGKTHRYVIDLMHHAARNGQVNLTVRRKVLCGGEPCPENGRSPGSVSTHHSSPRSDYATYTNSNHAAPSSNASPPEGFASHSLQTSDVVIHRKENEGFGFVIISSLNRPESGSTITVPHKIGRIIDGSPADRCAKLKVGDRILAVNGQSIINMPHADIVKLIKDAGLSVTLRIIPQEELNSPTSAPSSEKQSPMAQQSPLAQQSPLAQPSPATPNSPIAQPAPPQPLQLQGHENSYRSEVKARQDVKPDIRQPPFTDYRQPPLDYRQPPGGDYQQPPPLDYRQPPLLDYRQHSPDTRQYPLSDYRQPQDFDYFTVDMEKGAKGFGFSIRGGREYKMDLYVLRLAEDGPAIRNGRMRVGDQIIEINGESTRDMTHARAIELIKSGGRRVRLLLKRGTGQVPEYDEPAPWSSPAAAAPGLPEVGVSLDDGLAPFSPSHPAPPSDPSHQISPGPTWDIKREHDVRKPKELSACGQKKQRLGEQRERSASPQRAARPRLEEAPGGQGRPEAGRPASEARAPGLAAADAADAARAGGKEAPRAAAGSELCRREGPGAAPAFAGPGGGGSGALEAEGRAGARAGPRPGPRPPGGAPARKAAVAPGPWKVPGSDKLPSVLKPGASAASR.

A PDZ 1 domain is found at 17-101; the sequence is ESVIGRNPEG…PLRLKCVKQG (85 aa). A Guanylate kinase-like domain is found at 109 to 283; that stretch reads RHYLNLRFQK…APVYSQPEEL (175 aa). The tract at residues 205–306 is disordered; it reads PGATPSAEGK…DNEEPDPLPD (102 aa). Residues 241–252 are compositionally biased toward low complexity; it reads VVNGNGVVVTPE. The span at 281 to 296 shows a compositional bias: basic and acidic residues; that stretch reads EELKEQMDDTKPTKPE. WW domains follow at residues 302–335 and 348–381; these read DPLP…DPRL and NELP…NPVL. The segment at 302–381 is interaction with DDN; sequence DPLPDNWEMA…RRTQFENPVL (80 aa). Phosphotyrosine is present on Y362. PDZ domains lie at 426 to 510 and 605 to 683; these read STTL…CRGY and TLTI…HRGG. S686 carries the phosphoserine modification. The PDZ 4 domain occupies 778 to 860; that stretch reads DVHLRRMESG…NGQVNLTVRR (83 aa). The residue at position 827 (Y827) is a Phosphotyrosine. A disordered region spans residues 869 to 913; the sequence is CPENGRSPGSVSTHHSSPRSDYATYTNSNHAAPSSNASPPEGFAS. S884 and S885 each carry phosphoserine. Over residues 895-908 the composition is skewed to low complexity; sequence NSNHAAPSSNASPP. In terms of domain architecture, PDZ 5 spans 920–1010; that stretch reads DVVIHRKENE…SVTLRIIPQE (91 aa). Residues 1011 to 1040 are compositionally biased toward polar residues; it reads ELNSPTSAPSSEKQSPMAQQSPLAQQSPLA. The segment at 1011-1136 is disordered; the sequence is ELNSPTSAPS…PDTRQYPLSD (126 aa). S1014 is modified (phosphoserine). Basic and acidic residues predominate over residues 1067–1083; sequence NSYRSEVKARQDVKPDI. A PDZ 6 domain is found at 1147-1229; sequence TVDMEKGAKG…RVRLLLKRGT (83 aa). The disordered stretch occupies residues 1231 to 1455; the sequence is QVPEYDEPAP…LKPGASAASR (225 aa). Residues 1238-1249 show a composition bias toward low complexity; the sequence is PAPWSSPAAAAP. The span at 1287-1299 shows a compositional bias: basic and acidic residues; that stretch reads DIKREHDVRKPKE. Composition is skewed to low complexity over residues 1346–1363, 1399–1412, and 1422–1433; these read EARA…AARA, ALEA…RAGP, and APARKAAVAPGP.

It belongs to the MAGUK family. As to quaternary structure, interacts (via its WW domains) with DRPLA. Interacts (via its second PDZ domain) with PTEN (via unphosphorylated C-terminus); this interaction diminishes the degradation rate of PTEN. Interacts (via guanylate kinase domain) with DLGAP1. Interacts (via the PDZ domains) with GRIN2A, GRID2 and NLGN1. Interacts with CTNND2, CTNNB1, MAGUIN-1, ACVR2A, SMAD2 and SMAD3. Part of a complex consisting of MAGI2/ARIP1, ACVR2A, ACVR1B and SMAD3. May interact with HTR2A. Interacts with IGSF9, RAPGEF2 and HTR4. Identified in a complex with ACTN4, CASK, IQGAP1, NPHS1, SPTAN1 and SPTBN1. Found in a complex, at least composed of KIDINS220, MAGI2, NTRK1 and RAPGEF2; the complex is mainly formed at late endosomes in a NGF-dependent manner. Interacts with RAPGEF2; the interaction occurs before or after nerve growth factor (NGF) stimulation. Interacts (via PDZ domain) with KIDINS220 (via C-terminal domain). Interacts with DDN. Interacts with DLL1. Found in a complex with IGSF9B and NLGN2; the interaction with IGSF9B is mediated via the PDZ 5 and PDZ 6 domains, while the interaction with NLGN2 is mediated via the WW1, WW2 and PDZ2 domains. Interacts (via PDZ 6 domain) with USH1G (via SAM domain); the interaction is triggered by phosphorylation of USH1G by CK2 and negatively regulates MAGI2-mediated endocytosis. As to expression, specifically expressed in brain.

The protein resides in the cytoplasm. Its subcellular location is the late endosome. It localises to the synapse. It is found in the synaptosome. The protein localises to the cell membrane. The protein resides in the cytoskeleton. Its subcellular location is the microtubule organizing center. It localises to the centrosome. It is found in the cell projection. The protein localises to the cilium. The protein resides in the centriole. Its subcellular location is the photoreceptor inner segment. It localises to the photoreceptor outer segment. In terms of biological role, seems to act as a scaffold molecule at synaptic junctions by assembling neurotransmitter receptors and cell adhesion proteins. Plays a role in nerve growth factor (NGF)-induced recruitment of RAPGEF2 to late endosomes and neurite outgrowth. May play a role in regulating activin-mediated signaling in neuronal cells. Enhances the ability of PTEN to suppress AKT1 activation. Plays a role in receptor-mediated clathrin-dependent endocytosis which is required for ciliogenesis. In Homo sapiens (Human), this protein is Membrane-associated guanylate kinase, WW and PDZ domain-containing protein 2 (MAGI2).